A 287-amino-acid polypeptide reads, in one-letter code: Taxis protein CheF2 (287 aa).

Interacts with chemotaxis (Che) proteins as well as flagella accessory (Fla) proteins.

Involved in taxis signal transduction. The protein is Taxis protein CheF2 (cheF2) of Halobacterium salinarum (strain ATCC 29341 / DSM 671 / R1).